We begin with the raw amino-acid sequence, 616 residues long: Protein translocase subunit SecD (616 aa).

A run of 6 helical transmembrane segments spans residues 11 to 31, 453 to 473, 475 to 495, 497 to 517, 547 to 569, and 585 to 605; these read LMVI…IYGE, QGIN…LFYY, MFGV…VGLM, ILPG…TLGM, YNGA…IILY, and LGVA…VNAL.

It belongs to the SecD/SecF family. SecD subfamily. In terms of assembly, forms a complex with SecF. Part of the essential Sec protein translocation apparatus which comprises SecA, SecYEG and auxiliary proteins SecDF-YajC and YidC.

Its subcellular location is the cell inner membrane. In terms of biological role, part of the Sec protein translocase complex. Interacts with the SecYEG preprotein conducting channel. SecDF uses the proton motive force (PMF) to complete protein translocation after the ATP-dependent function of SecA. In Haemophilus influenzae (strain ATCC 51907 / DSM 11121 / KW20 / Rd), this protein is Protein translocase subunit SecD.